A 351-amino-acid polypeptide reads, in one-letter code: GTP 3',8-cyclase (351 aa).

The Radical SAM core domain occupies 29–254 (RFGRVARDLR…EHGREDPSAP (226 aa)). Arg38 provides a ligand contact to GTP. [4Fe-4S] cluster is bound by residues Cys45 and Cys49. Tyr51 provides a ligand contact to S-adenosyl-L-methionine. Residue Cys52 coordinates [4Fe-4S] cluster. Arg89 contributes to the GTP binding site. Position 93 (Gly93) interacts with S-adenosyl-L-methionine. Thr120 contacts GTP. Ser144 lines the S-adenosyl-L-methionine pocket. Lys181 is a GTP binding site. Met214 lines the S-adenosyl-L-methionine pocket. [4Fe-4S] cluster contacts are provided by Cys278 and Cys281. Position 283-285 (283-285 (RTR)) interacts with GTP. Cys295 contributes to the [4Fe-4S] cluster binding site.

Belongs to the radical SAM superfamily. MoaA family. In terms of assembly, monomer and homodimer. Requires [4Fe-4S] cluster as cofactor.

It catalyses the reaction GTP + AH2 + S-adenosyl-L-methionine = (8S)-3',8-cyclo-7,8-dihydroguanosine 5'-triphosphate + 5'-deoxyadenosine + L-methionine + A + H(+). It participates in cofactor biosynthesis; molybdopterin biosynthesis. In terms of biological role, catalyzes the cyclization of GTP to (8S)-3',8-cyclo-7,8-dihydroguanosine 5'-triphosphate. The chain is GTP 3',8-cyclase from Rhodococcus opacus (strain B4).